Reading from the N-terminus, the 132-residue chain is Small ribosomal subunit protein uS8c (132 aa).

The protein belongs to the universal ribosomal protein uS8 family. In terms of assembly, part of the 30S ribosomal subunit.

The protein resides in the plastid. It localises to the chloroplast. Functionally, one of the primary rRNA binding proteins, it binds directly to 16S rRNA central domain where it helps coordinate assembly of the platform of the 30S subunit. The sequence is that of Small ribosomal subunit protein uS8c (rps8) from Cycas taitungensis (Prince sago).